A 212-amino-acid polypeptide reads, in one-letter code: Thiamine-phosphate synthase (212 aa).

Position 38 to 42 (38 to 42 (QLREK)) interacts with 4-amino-2-methyl-5-(diphosphooxymethyl)pyrimidine. The Mg(2+) site is built by D71 and D90. K138 is a binding site for 4-amino-2-methyl-5-(diphosphooxymethyl)pyrimidine. G166 is a binding site for 2-[(2R,5Z)-2-carboxy-4-methylthiazol-5(2H)-ylidene]ethyl phosphate.

Belongs to the thiamine-phosphate synthase family. It depends on Mg(2+) as a cofactor.

The enzyme catalyses 2-[(2R,5Z)-2-carboxy-4-methylthiazol-5(2H)-ylidene]ethyl phosphate + 4-amino-2-methyl-5-(diphosphooxymethyl)pyrimidine + 2 H(+) = thiamine phosphate + CO2 + diphosphate. The catalysed reaction is 2-(2-carboxy-4-methylthiazol-5-yl)ethyl phosphate + 4-amino-2-methyl-5-(diphosphooxymethyl)pyrimidine + 2 H(+) = thiamine phosphate + CO2 + diphosphate. It carries out the reaction 4-methyl-5-(2-phosphooxyethyl)-thiazole + 4-amino-2-methyl-5-(diphosphooxymethyl)pyrimidine + H(+) = thiamine phosphate + diphosphate. Its pathway is cofactor biosynthesis; thiamine diphosphate biosynthesis; thiamine phosphate from 4-amino-2-methyl-5-diphosphomethylpyrimidine and 4-methyl-5-(2-phosphoethyl)-thiazole: step 1/1. Functionally, condenses 4-methyl-5-(beta-hydroxyethyl)thiazole monophosphate (THZ-P) and 2-methyl-4-amino-5-hydroxymethyl pyrimidine pyrophosphate (HMP-PP) to form thiamine monophosphate (TMP). In Chlamydia abortus (strain DSM 27085 / S26/3) (Chlamydophila abortus), this protein is Thiamine-phosphate synthase.